Here is a 198-residue protein sequence, read N- to C-terminus: Recombination protein RecR (198 aa).

The segment at 56-71 (CTECRDFSETKICAIC) adopts a C4-type zinc-finger fold. Positions 79–174 (HQLCVVESPP…RPSRLAQGLP (96 aa)) constitute a Toprim domain.

The protein belongs to the RecR family.

In terms of biological role, may play a role in DNA repair. It seems to be involved in an RecBC-independent recombinational process of DNA repair. It may act with RecF and RecO. This Xylella fastidiosa (strain 9a5c) protein is Recombination protein RecR.